We begin with the raw amino-acid sequence, 169 residues long: Proepiregulin (169 aa).

The first 29 residues, 1–29 (MTAGRRMEMLCAGRVPALLLCLGFHLLQA), serve as a signal peptide directing secretion. Residues 30-62 (VLSTTVIPSCIPGESSDNCTALVQTEDNPRVAQ) constitute a propeptide that is removed on maturation. An N-linked (GlcNAc...) asparagine glycan is attached at Asn47. The Extracellular portion of the chain corresponds to 60–119 (VAQVSITKCSSDMNGYCLHGQCIYLVDMSQNYCRCEVGYTGVRCEHFFLTVHQPLSKEYV). Positions 64–104 (SITKCSSDMNGYCLHGQCIYLVDMSQNYCRCEVGYTGVRCE) constitute an EGF-like domain. 3 disulfides stabilise this stretch: Cys68-Cys81, Cys76-Cys92, and Cys94-Cys103. The propeptide at 109–169 (TVHQPLSKEY…TSGDPELPQV (61 aa)) is removed in mature form. The helical transmembrane segment at 120-140 (ALTVILIILFLITVVGSTYYF) threads the bilayer. The Cytoplasmic segment spans residues 141–169 (CRWYRNRKSKEPKKEYERVTSGDPELPQV).

In terms of assembly, interacts with EGFR and ERBB4. In normal adults, expressed predominantly in the placenta and peripheral blood leukocytes. High levels were detected in carcinomas of the bladder, lung, kidney and colon.

It localises to the secreted. Its subcellular location is the extracellular space. It is found in the cell membrane. Its function is as follows. Ligand of the EGF receptor/EGFR and ERBB4. Stimulates EGFR and ERBB4 tyrosine phosphorylation. Contributes to inflammation, wound healing, tissue repair, and oocyte maturation by regulating angiogenesis and vascular remodeling and by stimulating cell proliferation. This chain is Proepiregulin (EREG), found in Homo sapiens (Human).